The primary structure comprises 176 residues: Ribosome maturation factor RimM (176 aa).

Residues 97–176 (EDEFYWRDLI…QILVDWDPDF (80 aa)) form the PRC barrel domain.

The protein belongs to the RimM family. Binds ribosomal protein uS19.

Its subcellular location is the cytoplasm. Its function is as follows. An accessory protein needed during the final step in the assembly of 30S ribosomal subunit, possibly for assembly of the head region. Essential for efficient processing of 16S rRNA. May be needed both before and after RbfA during the maturation of 16S rRNA. It has affinity for free ribosomal 30S subunits but not for 70S ribosomes. This Shewanella halifaxensis (strain HAW-EB4) protein is Ribosome maturation factor RimM.